The chain runs to 1441 residues: Protein clueless (1441 aa).

Disordered regions lie at residues 1–79 (MALD…EAAT) and 106–131 (VAANDESESAEQQAAENAASSGELES). A compositionally biased stretch (polar residues) spans 8 to 22 (KNSSSAATGDANTVK). The span at 54–63 (AKKKGKKNRN) shows a compositional bias: basic residues. Low complexity-rich tracts occupy residues 64–79 (KSPPIATDAETTEAAT) and 106–126 (VAANDESESAEQQAAENAASS). Ser273 bears the Phosphoserine mark. One can recognise a Clu domain in the interval 427–669 (RAEDAFSSKL…RTFPPDVNFL (243 aa)). The segment covering 726–753 (KKQDEAKEGTKEPASETEKESPPKAITE) has biased composition (basic and acidic residues). 2 disordered regions span residues 726–769 (KKQD…GETK) and 961–1009 (EIHK…SGGT). Over residues 964 to 977 (KKRTNTKYNKHKSS) the composition is skewed to basic residues. Low complexity predominate over residues 978-1009 (KSSGSGSKQSGQTSNQNGTSTSPSSSTASGGT). TPR repeat units lie at residues 1109-1142 (AYNFYTTGQSKIQQGLFKEGYELISEALNLLNNV), 1235-1268 (ALIDSNISLILHALGEYELSLRFIEHALKLNLKY), and 1270-1303 (GAKAMHVAVSYHLMARTQSCMGDFRSALNNEKET).

It belongs to the CLU family.

The protein resides in the cytoplasm. Its function is as follows. mRNA-binding protein involved in proper cytoplasmic distribution of mitochondria. This is Protein clueless from Drosophila willistoni (Fruit fly).